A 336-amino-acid chain; its full sequence is TBC1 domain family member 21 (336 aa).

Positions Gly57–Lys265 constitute a Rab-GAP TBC domain.

Interacts with ACTB. Interacts with ARMC12. Interacts with TOMM20 and DNAH7. Interacts with RAP1A. Interacts with RAB10. Expressed in testis, specifically in elongating and elongated spermatids (at protein level). Expressed in the sperm midpiece (at protein level).

The protein localises to the cytoplasmic vesicle. It is found in the secretory vesicle. Its subcellular location is the acrosome. It localises to the cytoplasm. The protein resides in the cytoskeleton. Functionally, acts as a GTPase-activating protein for Rab family protein (s). Essential for the establishment of male fertility, and is required for both the production of normal sperm number and sperm function. Plays an important role in the formation of intact mitochondria, outer dense fibers and axoneme within the sperm tail. Essential for sperm mitochondrial sheath formation and for the interactions of ARMC12 with VDAC2 and VDAC3. May be involved in acrosome formation and cytoskeletal reorganization during spermiogenesis, possibly by regulating RAB3A activity. In Mus musculus (Mouse), this protein is TBC1 domain family member 21.